We begin with the raw amino-acid sequence, 155 residues long: MADVPKREVENVEFVFEVMGSPGEGIDAVDLGDALRALNLNPTLALIEKLGGTKKRNEKKIKLDEFLPIYSQVKKEKEQGCYEDFIECLKLYDKEENGTMLLAELQHALLALGESLDDEQVETLFADCMDPEDDEGFIPYSQFVQRLMSDPVVFD.

EF-hand domains are found at residues 7 to 41 (REVENVEFVFEVMGSPGEGIDAVDLGDALRALNLN) and 80 to 115 (GCYEDFIECLKLYDKEENGTMLLAELQHALLALGES).

Myosin is a hexamer of 2 heavy chains and 4 light chains. As to expression, indirect flight muscle isoform is found only in the indirect flight muscles. The larval and adult isoform is present in the larval and adult musculature.

The chain is Myosin light chain alkali (Mlc1) from Drosophila melanogaster (Fruit fly).